The sequence spans 609 residues: Aspartate--tRNA(Asp/Asn) ligase (609 aa).

Glutamate 175 provides a ligand contact to L-aspartate. The interval 199-202 (QQFK) is aspartate. L-aspartate is bound by residues arginine 221 and histidine 468. 221–223 (RDE) contributes to the ATP binding site. Residue glutamate 502 participates in ATP binding. Arginine 509 contacts L-aspartate. 554-557 (GIDR) contacts ATP.

Belongs to the class-II aminoacyl-tRNA synthetase family. Type 1 subfamily. Homodimer.

Its subcellular location is the cytoplasm. It catalyses the reaction tRNA(Asx) + L-aspartate + ATP = L-aspartyl-tRNA(Asx) + AMP + diphosphate. Aspartyl-tRNA synthetase with relaxed tRNA specificity since it is able to aspartylate not only its cognate tRNA(Asp) but also tRNA(Asn). Reaction proceeds in two steps: L-aspartate is first activated by ATP to form Asp-AMP and then transferred to the acceptor end of tRNA(Asp/Asn). The chain is Aspartate--tRNA(Asp/Asn) ligase from Caulobacter sp. (strain K31).